Consider the following 384-residue polypeptide: Anhydro-N-acetylmuramic acid kinase (384 aa).

17 to 24 (GTSMDGVD) serves as a coordination point for ATP.

Belongs to the anhydro-N-acetylmuramic acid kinase family.

It carries out the reaction 1,6-anhydro-N-acetyl-beta-muramate + ATP + H2O = N-acetyl-D-muramate 6-phosphate + ADP + H(+). It functions in the pathway amino-sugar metabolism; 1,6-anhydro-N-acetylmuramate degradation. The protein operates within cell wall biogenesis; peptidoglycan recycling. Its function is as follows. Catalyzes the specific phosphorylation of 1,6-anhydro-N-acetylmuramic acid (anhMurNAc) with the simultaneous cleavage of the 1,6-anhydro ring, generating MurNAc-6-P. Is required for the utilization of anhMurNAc either imported from the medium or derived from its own cell wall murein, and thus plays a role in cell wall recycling. The protein is Anhydro-N-acetylmuramic acid kinase of Burkholderia thailandensis (strain ATCC 700388 / DSM 13276 / CCUG 48851 / CIP 106301 / E264).